We begin with the raw amino-acid sequence, 176 residues long: Large ribosomal subunit protein uL10 (176 aa).

It belongs to the universal ribosomal protein uL10 family. As to quaternary structure, part of the ribosomal stalk of the 50S ribosomal subunit. The N-terminus interacts with L11 and the large rRNA to form the base of the stalk. The C-terminus forms an elongated spine to which L12 dimers bind in a sequential fashion forming a multimeric L10(L12)X complex.

Forms part of the ribosomal stalk, playing a central role in the interaction of the ribosome with GTP-bound translation factors. This chain is Large ribosomal subunit protein uL10, found in Dehalococcoides mccartyi (strain ATCC BAA-2100 / JCM 16839 / KCTC 5957 / BAV1).